Consider the following 342-residue polypeptide: tRNA N6-adenosine threonylcarbamoyltransferase (342 aa).

Fe cation contacts are provided by His-115 and His-119. Substrate-binding positions include Leu-138–Gly-142, Asp-171, Gly-184, and Asn-276. Residue Asp-304 coordinates Fe cation.

Belongs to the KAE1 / TsaD family. Fe(2+) serves as cofactor.

Its subcellular location is the cytoplasm. The enzyme catalyses L-threonylcarbamoyladenylate + adenosine(37) in tRNA = N(6)-L-threonylcarbamoyladenosine(37) in tRNA + AMP + H(+). In terms of biological role, required for the formation of a threonylcarbamoyl group on adenosine at position 37 (t(6)A37) in tRNAs that read codons beginning with adenine. Is involved in the transfer of the threonylcarbamoyl moiety of threonylcarbamoyl-AMP (TC-AMP) to the N6 group of A37, together with TsaE and TsaB. TsaD likely plays a direct catalytic role in this reaction. The chain is tRNA N6-adenosine threonylcarbamoyltransferase from Dichelobacter nodosus (strain VCS1703A).